A 263-amino-acid polypeptide reads, in one-letter code: Proteasome subunit alpha type-1 (263 aa).

Met-1 carries the post-translational modification N-acetylmethionine. Position 110 is a phosphoserine; alternate (Ser-110). Ser-110 carries O-linked (GlcNAc) serine; alternate glycosylation. Lys-115 participates in a covalent cross-link: Glycyl lysine isopeptide (Lys-Gly) (interchain with G-Cter in ubiquitin). Ser-177 is modified (phosphoserine). Lys-208 participates in a covalent cross-link: Glycyl lysine isopeptide (Lys-Gly) (interchain with G-Cter in ubiquitin). The interval 232–263 (FLEGLEERPQRKAQPAQPADEPAEKADEPMEH) is disordered. Over residues 253–263 (PAEKADEPMEH) the composition is skewed to basic and acidic residues.

It belongs to the peptidase T1A family. The 26S proteasome consists of a 20S proteasome core and two 19S regulatory subunits. The 20S proteasome core is a barrel-shaped complex made of 28 subunits that are arranged in four stacked rings. The two outer rings are each formed by seven alpha subunits, and the two inner rings are formed by seven beta subunits. The proteolytic activity is exerted by three beta-subunits PSMB5, PSMB6 and PSMB7. Interacts with NOTCH3. Interacts with ZFAND1.

It is found in the cytoplasm. Its subcellular location is the nucleus. Its function is as follows. Component of the 20S core proteasome complex involved in the proteolytic degradation of most intracellular proteins. This complex plays numerous essential roles within the cell by associating with different regulatory particles. Associated with two 19S regulatory particles, forms the 26S proteasome and thus participates in the ATP-dependent degradation of ubiquitinated proteins. The 26S proteasome plays a key role in the maintenance of protein homeostasis by removing misfolded or damaged proteins that could impair cellular functions, and by removing proteins whose functions are no longer required. Associated with the PA200 or PA28, the 20S proteasome mediates ubiquitin-independent protein degradation. This type of proteolysis is required in several pathways including spermatogenesis (20S-PA200 complex) or generation of a subset of MHC class I-presented antigenic peptides (20S-PA28 complex). In Homo sapiens (Human), this protein is Proteasome subunit alpha type-1.